The chain runs to 126 residues: S-adenosylmethionine decarboxylase proenzyme (126 aa).

Ser63 serves as the catalytic Schiff-base intermediate with substrate; via pyruvic acid. Residue Ser63 is modified to Pyruvic acid (Ser); by autocatalysis. Residue His68 is the Proton acceptor; for processing activity of the active site. Cys83 functions as the Proton donor; for catalytic activity in the catalytic mechanism.

It belongs to the prokaryotic AdoMetDC family. Type 1 subfamily. In terms of assembly, heterotetramer of two alpha and two beta chains arranged as a dimer of alpha/beta heterodimers. Pyruvate is required as a cofactor. In terms of processing, is synthesized initially as an inactive proenzyme. Formation of the active enzyme involves a self-maturation process in which the active site pyruvoyl group is generated from an internal serine residue via an autocatalytic post-translational modification. Two non-identical subunits are generated from the proenzyme in this reaction, and the pyruvate is formed at the N-terminus of the alpha chain, which is derived from the carboxyl end of the proenzyme. The post-translation cleavage follows an unusual pathway, termed non-hydrolytic serinolysis, in which the side chain hydroxyl group of the serine supplies its oxygen atom to form the C-terminus of the beta chain, while the remainder of the serine residue undergoes an oxidative deamination to produce ammonia and the pyruvoyl group blocking the N-terminus of the alpha chain.

The enzyme catalyses S-adenosyl-L-methionine + H(+) = S-adenosyl 3-(methylsulfanyl)propylamine + CO2. Its pathway is amine and polyamine biosynthesis; S-adenosylmethioninamine biosynthesis; S-adenosylmethioninamine from S-adenosyl-L-methionine: step 1/1. Its function is as follows. Catalyzes the decarboxylation of S-adenosylmethionine to S-adenosylmethioninamine (dcAdoMet), the propylamine donor required for the synthesis of the polyamines spermine and spermidine from the diamine putrescine. This chain is S-adenosylmethionine decarboxylase proenzyme, found in Bacillus velezensis (strain DSM 23117 / BGSC 10A6 / LMG 26770 / FZB42) (Bacillus amyloliquefaciens subsp. plantarum).